The primary structure comprises 308 residues: Ribosomal RNA large subunit methyltransferase F (308 aa).

The protein belongs to the methyltransferase superfamily. METTL16/RlmF family.

The protein localises to the cytoplasm. The enzyme catalyses adenosine(1618) in 23S rRNA + S-adenosyl-L-methionine = N(6)-methyladenosine(1618) in 23S rRNA + S-adenosyl-L-homocysteine + H(+). Specifically methylates the adenine in position 1618 of 23S rRNA. The chain is Ribosomal RNA large subunit methyltransferase F from Escherichia coli O17:K52:H18 (strain UMN026 / ExPEC).